We begin with the raw amino-acid sequence, 127 residues long: MERWFWIGLGGAAGTLARYGLSTWCQQRFGAEFPYGTLAVNVIGSFLLGAIGEIAATTELLSPTLRLSLSTGVMGGFTTYSSFNNETIRLIEYKSWAAGLANIAITLVVCLLAGVLGMVVARRLIAG.

The next 2 helical transmembrane spans lie at W4 to W24 and G36 to A56. Na(+) is bound by residues G75 and T78. The chain crosses the membrane as a helical span at residues L100 to V120.

This sequence belongs to the fluoride channel Fluc/FEX (TC 1.A.43) family.

It is found in the cell inner membrane. It catalyses the reaction fluoride(in) = fluoride(out). Its activity is regulated as follows. Na(+) is not transported, but it plays an essential structural role and its presence is essential for fluoride channel function. Fluoride-specific ion channel. Important for reducing fluoride concentration in the cell, thus reducing its toxicity. The sequence is that of Fluoride-specific ion channel FluC from Sorangium cellulosum (strain So ce56) (Polyangium cellulosum (strain So ce56)).